Reading from the N-terminus, the 195-residue chain is MRSHSITRSTAETDIEVSVQLDGTGRYDNQTGVGFFDHMLDQLARHSLIDLSVRAKGDLHVDDHHTVEDTGIALGQALAGALGDKRGIVRYGSCLLPMDDALVRCALDLSARPYLIWNVDMPTAKIGTFDTELVREFFTALATHGGITLHIDLLHGINSHHIAEATFKSVARALRQAVETDPRKSDAIPSTKGAL.

This sequence belongs to the imidazoleglycerol-phosphate dehydratase family.

Its subcellular location is the cytoplasm. It carries out the reaction D-erythro-1-(imidazol-4-yl)glycerol 3-phosphate = 3-(imidazol-4-yl)-2-oxopropyl phosphate + H2O. Its pathway is amino-acid biosynthesis; L-histidine biosynthesis; L-histidine from 5-phospho-alpha-D-ribose 1-diphosphate: step 6/9. The protein is Imidazoleglycerol-phosphate dehydratase of Roseobacter denitrificans (strain ATCC 33942 / OCh 114) (Erythrobacter sp. (strain OCh 114)).